A 536-amino-acid chain; its full sequence is DNA damage-binding protein CMR1 (536 aa).

Basic and acidic residues predominate over residues 36–45; that stretch reads REAGVDDTHR. The segment at 36–72 is disordered; the sequence is REAGVDDTHRTVVKKKKSPSVSRGRSASPKVAPVATR. WD repeat units lie at residues 195-236, 251-291, 346-386, 403-442, 456-495, and 496-535; these read LVYE…LSEN, FFTK…SNDI, LSDK…KKPE, DSRL…LPDD, GRWT…LAHL, and PTAT…KEEE.

The protein belongs to the WD repeat DDB2/WDR76 family.

DNA-binding protein that binds to both single- and double-stranded DNA. Binds preferentially to UV-damaged DNA. May be involved in DNA-metabolic processes. This Vanderwaltozyma polyspora (strain ATCC 22028 / DSM 70294 / BCRC 21397 / CBS 2163 / NBRC 10782 / NRRL Y-8283 / UCD 57-17) (Kluyveromyces polysporus) protein is DNA damage-binding protein CMR1.